The sequence spans 342 residues: MRNILLKIYDSKFLNQEESYQLFTLISSGKITDIKLASILTAMKIRGESIEEITGAIKAFLDKMKYFPKPDYIFSDIVGTGGDAKNTINISTMSAFVAATCGLKIIKHCNQRISSKSGSSDILEKFNINLNASPEKSRKTLDQLNICFLFAPKYHDGFKYSNNVRTDLKTKTIFNFLGPFLNPATPPLSVIGVYNKNLINIAVNILKNLQYKRAIVLHSDNTDEVTLHGTTYVSELLNKKIISYQLQPESFGLKMHPKKILKINSLEENYHIIKEIMKGKGSKLYEELIAVNVAMLLKVFGYENLKENTKLALNKIRSGDVYKHIRNVANMLKEDNHARHNT.

Residues G79, 82–83 (GD), T87, 89–92 (NIST), 107–115 (KHCNQRISS), and S119 each bind 5-phospho-alpha-D-ribose 1-diphosphate. Anthranilate is bound at residue G79. Position 91 (S91) interacts with Mg(2+). N110 contributes to the anthranilate binding site. R165 provides a ligand contact to anthranilate. Residues D223 and E224 each contribute to the Mg(2+) site.

This sequence belongs to the anthranilate phosphoribosyltransferase family. In terms of assembly, homodimer. The cofactor is Mg(2+).

It carries out the reaction N-(5-phospho-beta-D-ribosyl)anthranilate + diphosphate = 5-phospho-alpha-D-ribose 1-diphosphate + anthranilate. The protein operates within amino-acid biosynthesis; L-tryptophan biosynthesis; L-tryptophan from chorismate: step 2/5. Functionally, catalyzes the transfer of the phosphoribosyl group of 5-phosphorylribose-1-pyrophosphate (PRPP) to anthranilate to yield N-(5'-phosphoribosyl)-anthranilate (PRA). This chain is Anthranilate phosphoribosyltransferase, found in Buchnera aphidicola subsp. Acyrthosiphon pisum (strain Tuc7).